A 185-amino-acid chain; its full sequence is Pyruvate/ketoisovalerate oxidoreductases common subunit gamma (185 aa).

As to quaternary structure, heterotetramer of one alpha, one beta, one delta and one gamma chain.

The enzyme catalyses 2 oxidized [2Fe-2S]-[ferredoxin] + pyruvate + CoA = 2 reduced [2Fe-2S]-[ferredoxin] + acetyl-CoA + CO2 + H(+). It catalyses the reaction 3-methyl-2-oxobutanoate + 2 oxidized [2Fe-2S]-[ferredoxin] + CoA = 2-methylpropanoyl-CoA + 2 reduced [2Fe-2S]-[ferredoxin] + CO2 + H(+). This is Pyruvate/ketoisovalerate oxidoreductases common subunit gamma (porG) from Pyrococcus furiosus (strain ATCC 43587 / DSM 3638 / JCM 8422 / Vc1).